Reading from the N-terminus, the 95-residue chain is Cytosolic calcium-binding protein 3 (95 aa).

A run of 6 repeats spans residues 30–35, 39–43, 54–59, 67–71, 75–79, and 90–94. The tract at residues 30 to 94 is 6 X 5 AA approximate repeats of V-E-E-K-K; sequence VEDAEKTNED…AEEVAVEKAK (65 aa). Residues 54–95 are disordered; sequence VEEEKKAEEVTETPEEKKTEALEEKQTEVAAAEEVAVEKAKE. Positions 55-80 are enriched in basic and acidic residues; the sequence is EEEKKAEEVTETPEEKKTEALEEKQT.

In terms of tissue distribution, low levels in roots (e.g. in cambium) and barely expressed in stems, shoots, flowers, siliques and leaves.

The protein resides in the cytoplasm. It localises to the cytosol. Its function is as follows. Binds calcium Ca(2+) and may act as a signal mediator to buffer Ca(2+). In Arabidopsis thaliana (Mouse-ear cress), this protein is Cytosolic calcium-binding protein 3.